Consider the following 482-residue polypeptide: Peptide chain release factor PrfB2, chloroplastic (482 aa).

The N-terminal 21 residues, 1-21 (MLSLIIRRSRSRFIIHGIKIS), are a transit peptide targeting the chloroplast.

The protein belongs to the prokaryotic/mitochondrial release factor family.

It localises to the plastid. Its subcellular location is the chloroplast stroma. In terms of biological role, directs the termination of translation in response to the peptide chain termination codon UGA. Required for the proper translation, stability and normal processing of UGA-containing polycistronic transcripts in chloroplasts. The sequence is that of Peptide chain release factor PrfB2, chloroplastic from Arabidopsis thaliana (Mouse-ear cress).